Here is a 92-residue protein sequence, read N- to C-terminus: N(2)-fixation sustaining protein CowN (92 aa).

Belongs to the CowN family.

Functionally, is required to sustain N(2)-dependent growth in the presence of low levels of carbon monoxide (CO). Probably acts by protecting the N(2) fixation ability of the nitrogenase complex, which is inactivated in the presence of CO. The polypeptide is N(2)-fixation sustaining protein CowN (Rhodopseudomonas palustris (strain ATCC BAA-98 / CGA009)).